Here is a 41-residue protein sequence, read N- to C-terminus: Augerpeptide hhe6.1 (41 aa).

Disulfide bonds link Cys-11–Cys-32, Cys-18–Cys-35, and Cys-31–Cys-40.

As to expression, expressed by the venom duct.

Its subcellular location is the secreted. The protein is Augerpeptide hhe6.1 of Hastula hectica (Sea snail).